Reading from the N-terminus, the 169-residue chain is S-ribosylhomocysteine lyase (169 aa).

Fe cation is bound by residues His-54, His-58, and Cys-128.

Belongs to the LuxS family. Homodimer. It depends on Fe cation as a cofactor.

It catalyses the reaction S-(5-deoxy-D-ribos-5-yl)-L-homocysteine = (S)-4,5-dihydroxypentane-2,3-dione + L-homocysteine. Functionally, involved in the synthesis of autoinducer 2 (AI-2) which is secreted by bacteria and is used to communicate both the cell density and the metabolic potential of the environment. The regulation of gene expression in response to changes in cell density is called quorum sensing. Catalyzes the transformation of S-ribosylhomocysteine (RHC) to homocysteine (HC) and 4,5-dihydroxy-2,3-pentadione (DPD). The polypeptide is S-ribosylhomocysteine lyase (Sulfurovum sp. (strain NBC37-1)).